A 408-amino-acid chain; its full sequence is Photox toxin (408 aa).

The disordered stretch occupies residues 168-196 (NNQQHIKDSDGRKPVNNMPPPPPPPMADK). The segment covering 184-193 (NMPPPPPPPM) has biased composition (pro residues). The region spanning 190–393 (PPPMADKTQK…LRLTDDASAD (204 aa)) is the TR mART core domain. Catalysis depends on residues Arg288, Ser318, and Glu355.

In the C-terminal section; belongs to the SpvB family.

It catalyses the reaction L-arginyl-[protein] + NAD(+) = N(omega)-(ADP-D-ribosyl)-L-arginyl-[protein] + nicotinamide + H(+). Mono-ADP-ribosylates chicken skeletal alpha-actin and human non-skeletal beta- and gamma-actin. Mono-ADP-ribosylates 'Arg-177' of yeast actin, blocking its ability to polymerize. Does not possess NAD(+)-glycohydrolase activity, unlike most mART enzymes. Upon expression in S.cerevisiae almost completely inhibits growth. The chain is Photox toxin (phxA) from Photorhabdus laumondii subsp. laumondii (strain DSM 15139 / CIP 105565 / TT01) (Photorhabdus luminescens subsp. laumondii).